Here is a 298-residue protein sequence, read N- to C-terminus: DNA-binding transcriptional activator HetR (298 aa).

Residue Ser152 is part of the active site.

Belongs to the peptidase S48 family. Homodimer; disulfide-linked.

Its function is as follows. Controls heterocyst differentiation. Dimerization is required for DNA-binding. Has both a protease and a DNA-binding activity. In Nostoc sp. (strain PCC 9229), this protein is DNA-binding transcriptional activator HetR.